A 336-amino-acid polypeptide reads, in one-letter code: D-erythrose-4-phosphate dehydrogenase (336 aa).

Residues 11–12 (RI) and Arg-80 each bind NAD(+). Residues 153-155 (SCT), Arg-199, 212-213 (TK), and Arg-235 each bind substrate. Cys-154 serves as the catalytic Nucleophile. Asn-317 contacts NAD(+).

The protein belongs to the glyceraldehyde-3-phosphate dehydrogenase family. Epd subfamily. Homotetramer.

It localises to the cytoplasm. The catalysed reaction is D-erythrose 4-phosphate + NAD(+) + H2O = 4-phospho-D-erythronate + NADH + 2 H(+). It functions in the pathway cofactor biosynthesis; pyridoxine 5'-phosphate biosynthesis; pyridoxine 5'-phosphate from D-erythrose 4-phosphate: step 1/5. Functionally, catalyzes the NAD-dependent conversion of D-erythrose 4-phosphate to 4-phosphoerythronate. In Aeromonas hydrophila subsp. hydrophila (strain ATCC 7966 / DSM 30187 / BCRC 13018 / CCUG 14551 / JCM 1027 / KCTC 2358 / NCIMB 9240 / NCTC 8049), this protein is D-erythrose-4-phosphate dehydrogenase.